We begin with the raw amino-acid sequence, 354 residues long: Methylthioribose-1-phosphate isomerase (354 aa).

Substrate is bound by residues 49–51 (RGA), Arg-92, and Gln-199. The Proton donor role is filled by Asp-240. 250-251 (NK) contributes to the substrate binding site.

Belongs to the eIF-2B alpha/beta/delta subunits family. MtnA subfamily.

The catalysed reaction is 5-(methylsulfanyl)-alpha-D-ribose 1-phosphate = 5-(methylsulfanyl)-D-ribulose 1-phosphate. The protein operates within amino-acid biosynthesis; L-methionine biosynthesis via salvage pathway; L-methionine from S-methyl-5-thio-alpha-D-ribose 1-phosphate: step 1/6. In terms of biological role, catalyzes the interconversion of methylthioribose-1-phosphate (MTR-1-P) into methylthioribulose-1-phosphate (MTRu-1-P). This is Methylthioribose-1-phosphate isomerase from Koribacter versatilis (strain Ellin345).